The sequence spans 1377 residues: Clustered mitochondria protein homolog (1377 aa).

Positions 1–61 (MLKSIQRNGK…GETKKKSDSE (61 aa)) are disordered. Positions 353 to 595 (RAEDTFSSKL…RTFPPDVNFL (243 aa)) constitute a Clu domain. One copy of the TPR 1 repeat lies at 519 to 552 (VYGSIDFGKTVLSHEKYLELLNNAGKHLKIYPHS). Disordered regions lie at residues 651–700 (NKRQ…VPKV) and 886–917 (DVLTKSGSSGKQQRKQNKRTAAGGGKGGKSSF). Positions 655–690 (QKQDTPKEETKAIEPAAKEDSANNNKEEPAAKKGEP) are enriched in basic and acidic residues. The segment covering 886 to 896 (DVLTKSGSSGK) has biased composition (polar residues). 3 TPR repeats span residues 1022–1055 (AYNFYTTGQTKIQQGYFKDGYDLISEALNLLNNV), 1148–1181 (ALLDSNISLILHAVGEYELSLRFLEHALALNIKY), and 1183–1216 (GEKSLKVAVSYHLVARTQSCMGDFRSALNNEKET). Residues 1310 to 1377 (KEGGAAGESS…SKANPVASSS (68 aa)) are disordered. Low complexity predominate over residues 1364-1377 (ASSSSKANPVASSS).

The protein belongs to the CLU family.

It localises to the cytoplasm. MRNA-binding protein involved in proper cytoplasmic distribution of mitochondria. The sequence is that of Clustered mitochondria protein homolog from Culex quinquefasciatus (Southern house mosquito).